The primary structure comprises 387 residues: 8-amino-7-oxononanoate synthase (387 aa).

Residue R19 participates in substrate binding. 106 to 107 (GY) contacts pyridoxal 5'-phosphate. H131 is a binding site for substrate. Pyridoxal 5'-phosphate contacts are provided by S177, H205, and T234. K237 carries the N6-(pyridoxal phosphate)lysine modification. Position 351 (T351) interacts with substrate.

The protein belongs to the class-II pyridoxal-phosphate-dependent aminotransferase family. BioF subfamily. As to quaternary structure, homodimer. The cofactor is pyridoxal 5'-phosphate.

It catalyses the reaction 6-carboxyhexanoyl-[ACP] + L-alanine + H(+) = (8S)-8-amino-7-oxononanoate + holo-[ACP] + CO2. The protein operates within cofactor biosynthesis; biotin biosynthesis. In terms of biological role, catalyzes the decarboxylative condensation of pimeloyl-[acyl-carrier protein] and L-alanine to produce 8-amino-7-oxononanoate (AON), [acyl-carrier protein], and carbon dioxide. The protein is 8-amino-7-oxononanoate synthase of Methylococcus capsulatus (strain ATCC 33009 / NCIMB 11132 / Bath).